We begin with the raw amino-acid sequence, 180 residues long: Large ribosomal subunit protein uL6 (180 aa).

Belongs to the universal ribosomal protein uL6 family. As to quaternary structure, part of the 50S ribosomal subunit.

In terms of biological role, this protein binds to the 23S rRNA, and is important in its secondary structure. It is located near the subunit interface in the base of the L7/L12 stalk, and near the tRNA binding site of the peptidyltransferase center. This is Large ribosomal subunit protein uL6 from Prosthecochloris aestuarii (strain DSM 271 / SK 413).